Here is a 202-residue protein sequence, read N- to C-terminus: MSRYRGPRVKIIRRLGALPGLTNKTPQLKSNLINQSTSNKKISQYRIRLEEKQKLRFHYGITERQLLNYVRIARKAKGSTGEVLLQLLEMRLDNVIFRLGMTPTIPGARQLVNHRHILVNDYIVDIPSYRCKPQDFITIKNQRKSESIINKNINFYQKYKIPNHLTYNSLEKKGLVNQILDRESIGLKVNELLVVEYYSRQA.

One can recognise an S4 RNA-binding domain in the interval 90–152; that stretch reads MRLDNVIFRL…RKSESIINKN (63 aa).

Belongs to the universal ribosomal protein uS4 family. As to quaternary structure, part of the 30S ribosomal subunit. Contacts protein S5. The interaction surface between S4 and S5 is involved in control of translational fidelity.

The protein localises to the plastid. Its subcellular location is the chloroplast. In terms of biological role, one of the primary rRNA binding proteins, it binds directly to 16S rRNA where it nucleates assembly of the body of the 30S subunit. Functionally, with S5 and S12 plays an important role in translational accuracy. This is Small ribosomal subunit protein uS4c (rps4) from Dendrohypopterygium filiculiforme (Moss).